A 205-amino-acid polypeptide reads, in one-letter code: Large ribosomal subunit protein uL4 (205 aa).

The interval 43 to 95 (RSGNRAQKDRAEVKHSTKKPWRQKGTGRARAGMTSSPLWRGGGRAFPNSPEEN) is disordered. The segment covering 48 to 57 (AQKDRAEVKH) has biased composition (basic and acidic residues). Residues 58 to 69 (STKKPWRQKGTG) are compositionally biased toward basic residues.

Belongs to the universal ribosomal protein uL4 family. Part of the 50S ribosomal subunit.

Functionally, one of the primary rRNA binding proteins, this protein initially binds near the 5'-end of the 23S rRNA. It is important during the early stages of 50S assembly. It makes multiple contacts with different domains of the 23S rRNA in the assembled 50S subunit and ribosome. Forms part of the polypeptide exit tunnel. This is Large ribosomal subunit protein uL4 from Bordetella bronchiseptica (strain ATCC BAA-588 / NCTC 13252 / RB50) (Alcaligenes bronchisepticus).